The chain runs to 470 residues: Asparagine--tRNA ligase (470 aa).

It belongs to the class-II aminoacyl-tRNA synthetase family. In terms of assembly, homodimer.

Its subcellular location is the cytoplasm. The catalysed reaction is tRNA(Asn) + L-asparagine + ATP = L-asparaginyl-tRNA(Asn) + AMP + diphosphate + H(+). The chain is Asparagine--tRNA ligase from Blochmanniella pennsylvanica (strain BPEN).